Here is a 455-residue protein sequence, read N- to C-terminus: Glutamyl-tRNA reductase (455 aa).

Substrate contacts are provided by residues 49–52 (TCNR), serine 109, 114–116 (EAQ), and glutamine 120. Cysteine 50 serves as the catalytic Nucleophile. 190–195 (GAGAMG) contacts NADP(+).

The protein belongs to the glutamyl-tRNA reductase family. Homodimer.

It catalyses the reaction (S)-4-amino-5-oxopentanoate + tRNA(Glu) + NADP(+) = L-glutamyl-tRNA(Glu) + NADPH + H(+). It functions in the pathway porphyrin-containing compound metabolism; protoporphyrin-IX biosynthesis; 5-aminolevulinate from L-glutamyl-tRNA(Glu): step 1/2. Catalyzes the NADPH-dependent reduction of glutamyl-tRNA(Glu) to glutamate 1-semialdehyde (GSA). The polypeptide is Glutamyl-tRNA reductase (Salinispora arenicola (strain CNS-205)).